We begin with the raw amino-acid sequence, 800 residues long: Transducin beta-like protein 3 (800 aa).

Position 2 is an N-acetylalanine (Ala2). WD repeat units follow at residues 64 to 105, 107 to 146, 149 to 190, 193 to 232, 245 to 284, 290 to 329, 332 to 372, 374 to 413, 419 to 459, 477 to 516, 519 to 560, 562 to 602, and 604 to 642; these read EDQE…RLWK, IHTAPVASMAFDATSTLLATGGCDGAVRVWDIVQHYGTHH, GSPG…CLAV, AHYSAVTSLSFSEDGHTMLSSGRDKICIVWDLRSYETSRT, LPEEPALALGVKNSGLHFLTAGDQGILRVWEAASGQCVYT, GLRQELTHCTLARAAGLLLTVTADHNLLLYEARSLQLQKQ, GYSE…CQIL, GHTDIVLALDVFRKGWLFASCAKDQSIRIWRMNKAGQVAC, GHTH…PSKN, CHDKDINSLAVSPNDKLLATGSQDRTAKLWALPQCQLLGV, GHRR…KTFE, HDAS…RTLD, and HEDKVWGLHCSRLDDHAITGGSDSRIILWKDVTEAEQAE. Lys407 participates in a covalent cross-link: Glycyl lysine isopeptide (Lys-Gly) (interchain with G-Cter in SUMO2).

In terms of assembly, part of the small subunit (SSU) processome, composed of more than 70 proteins and the RNA chaperone small nucleolar RNA (snoRNA) U3.

It localises to the nucleus. The protein resides in the nucleolus. Its function is as follows. Part of the small subunit (SSU) processome, first precursor of the small eukaryotic ribosomal subunit. During the assembly of the SSU processome in the nucleolus, many ribosome biogenesis factors, an RNA chaperone and ribosomal proteins associate with the nascent pre-rRNA and work in concert to generate RNA folding, modifications, rearrangements and cleavage as well as targeted degradation of pre-ribosomal RNA by the RNA exosome. This Rattus norvegicus (Rat) protein is Transducin beta-like protein 3 (Tbl3).